Consider the following 67-residue polypeptide: UPF0437 protein y4xE (67 aa).

The protein belongs to the UPF0437 family.

This is UPF0437 protein y4xE from Sinorhizobium fredii (strain NBRC 101917 / NGR234).